Here is a 260-residue protein sequence, read N- to C-terminus: uncharacterized protein (260 aa).

The N-terminal stretch at 1–22 (MGNIKSFALYISILLLIVVVAG) is a signal peptide. Cys23 carries N-palmitoyl cysteine lipidation. Cys23 is lipidated: S-diacylglycerol cysteine.

The protein belongs to the staphylococcal tandem lipoprotein family.

The protein localises to the cell membrane. This is an uncharacterized protein from Staphylococcus aureus (strain MRSA252).